Here is a 96-residue protein sequence, read N- to C-terminus: Co-chaperonin GroES (96 aa).

Belongs to the GroES chaperonin family. As to quaternary structure, heptamer of 7 subunits arranged in a ring. Interacts with the chaperonin GroEL.

The protein resides in the cytoplasm. In terms of biological role, together with the chaperonin GroEL, plays an essential role in assisting protein folding. The GroEL-GroES system forms a nano-cage that allows encapsulation of the non-native substrate proteins and provides a physical environment optimized to promote and accelerate protein folding. GroES binds to the apical surface of the GroEL ring, thereby capping the opening of the GroEL channel. The chain is Co-chaperonin GroES from Nitrosomonas eutropha (strain DSM 101675 / C91 / Nm57).